The sequence spans 638 residues: tRNA uridine 5-carboxymethylaminomethyl modification enzyme MnmG (638 aa).

FAD is bound by residues 13–18, V125, and S180; that span reads GGGHAG. An NAD(+)-binding site is contributed by 273-287; it reads GPRYCPSIEDKIHRF. FAD is bound at residue Q370.

This sequence belongs to the MnmG family. Homodimer. Heterotetramer of two MnmE and two MnmG subunits. FAD serves as cofactor.

The protein resides in the cytoplasm. NAD-binding protein involved in the addition of a carboxymethylaminomethyl (cmnm) group at the wobble position (U34) of certain tRNAs, forming tRNA-cmnm(5)s(2)U34. The protein is tRNA uridine 5-carboxymethylaminomethyl modification enzyme MnmG of Cellvibrio japonicus (strain Ueda107) (Pseudomonas fluorescens subsp. cellulosa).